We begin with the raw amino-acid sequence, 383 residues long: 8-amino-7-oxononanoate synthase (383 aa).

Arg-22 lines the substrate pocket. Pyridoxal 5'-phosphate is bound at residue 109-110 (GF). A substrate-binding site is contributed by His-134. 3 residues coordinate pyridoxal 5'-phosphate: Ser-178, His-206, and Thr-232. Lys-235 is modified (N6-(pyridoxal phosphate)lysine). Thr-348 is a substrate binding site.

The protein belongs to the class-II pyridoxal-phosphate-dependent aminotransferase family. BioF subfamily. As to quaternary structure, homodimer. Pyridoxal 5'-phosphate serves as cofactor.

The enzyme catalyses 6-carboxyhexanoyl-[ACP] + L-alanine + H(+) = (8S)-8-amino-7-oxononanoate + holo-[ACP] + CO2. It functions in the pathway cofactor biosynthesis; biotin biosynthesis. Its function is as follows. Catalyzes the decarboxylative condensation of pimeloyl-[acyl-carrier protein] and L-alanine to produce 8-amino-7-oxononanoate (AON), [acyl-carrier protein], and carbon dioxide. This is 8-amino-7-oxononanoate synthase from Vibrio parahaemolyticus serotype O3:K6 (strain RIMD 2210633).